A 25-amino-acid polypeptide reads, in one-letter code: ATP-dependent 6-phosphofructokinase 2 (25 aa).

Residue Gly11 participates in ATP binding.

This sequence belongs to the phosphofructokinase type A (PFKA) family. ATP-dependent PFK group I subfamily. Prokaryotic clade 'B1' sub-subfamily. In terms of assembly, homotetramer. It depends on Mg(2+) as a cofactor.

It localises to the cytoplasm. It carries out the reaction beta-D-fructose 6-phosphate + ATP = beta-D-fructose 1,6-bisphosphate + ADP + H(+). It functions in the pathway carbohydrate degradation; glycolysis; D-glyceraldehyde 3-phosphate and glycerone phosphate from D-glucose: step 3/4. Its activity is regulated as follows. In contrast with PFK1 this enzyme is not affected by phosphoenolpyruvate. In terms of biological role, catalyzes the phosphorylation of D-fructose 6-phosphate to fructose 1,6-bisphosphate by ATP, the first committing step of glycolysis. This Thermus thermophilus (strain ATCC 27634 / DSM 579 / HB8) protein is ATP-dependent 6-phosphofructokinase 2 (pfkA2).